A 327-amino-acid polypeptide reads, in one-letter code: Voltage-dependent calcium channel gamma-4 subunit (327 aa).

The Cytoplasmic segment spans residues 1 to 9 (MVRCDRGLQ). A helical transmembrane segment spans residues 10–30 (MLLTTAGAFAAFSLMAIAIGT). Residues 31–107 (DYWLYSSAHI…EYLLRIVRAS (77 aa)) are Extracellular-facing. N-linked (GlcNAc...) asparagine glycans are attached at residues N42 and N45. A helical membrane pass occupies residues 108 to 128 (SVFPILSTILLLLGGLCIGAG). Over 129–136 (RIYSRKNN) the chain is Cytoplasmic. Residues 137-157 (IVLSAGILFVAAGLSNIIGII) traverse the membrane as a helical segment. Residues 158 to 186 (VYISSNTGDPSDKRDEDKKNHYNYGWSFY) lie on the Extracellular side of the membrane. Residues 187–207 (FGALSFIVAETVGVLAVNIYI) traverse the membrane as a helical segment. At 208-327 (EKNKELRFKT…SMLNRRTTPV (120 aa)) the chain is on the cytoplasmic side. Residues 235–261 (SYRYRRRRSRSSSRSTEASPSRDVSPM) are disordered. The span at 246–256 (SSRSTEASPSR) shows a compositional bias: low complexity. The residue at position 259 (S259) is a Phosphoserine.

It belongs to the PMP-22/EMP/MP20 family. CACNG subfamily. In terms of assembly, interacts with CACNA1C. Identified in a complex with the L-type calcium channel subunits CACNA1C, CACNA2D1 and either CACNB1 or CACNB2. Acts as an auxiliary subunit for AMPA-selective glutamate receptors (AMPARs). Interacts with GRIA1. As to expression, detected in heart left ventricle.

The protein resides in the cell membrane. In terms of biological role, regulates the activity of L-type calcium channels that contain CACNA1C as pore-forming subunit. Regulates the trafficking and gating properties of AMPA-selective glutamate receptors (AMPARs), including GRIA1 and GRIA4. Promotes their targeting to the cell membrane and synapses and modulates their gating properties by slowing their rates of activation, deactivation and desensitization and by mediating their resensitization. The polypeptide is Voltage-dependent calcium channel gamma-4 subunit (CACNG4) (Homo sapiens (Human)).